Consider the following 170-residue polypeptide: MKVIIASQNPAKIAAVESAFNLAFPNDTFSFEGVSVKSGVPDQPMSCEETKQGAINRVNNAKIKLPNCDYYVGLEAGIEGNSTFAWMIIDNGLTVGESRSSSLPLPPQVIDEVKKGKELGDVMDEQFNTDNIKQKGGAIGLLTNNLLTRTSVYQQALILALIPFLHPTRF.

The protein belongs to the YjjX NTPase family. In terms of assembly, homodimer. It depends on Mg(2+) as a cofactor. The cofactor is Mn(2+).

The enzyme catalyses XTP + H2O = XDP + phosphate + H(+). It catalyses the reaction ITP + H2O = IDP + phosphate + H(+). Phosphatase that hydrolyzes non-canonical purine nucleotides such as XTP and ITP to their respective diphosphate derivatives. Probably excludes non-canonical purines from DNA/RNA precursor pool, thus preventing their incorporation into DNA/RNA and avoiding chromosomal lesions. This is Inosine/xanthosine triphosphatase from Aliivibrio fischeri (strain MJ11) (Vibrio fischeri).